The sequence spans 562 residues: NAD-dependent malic enzyme (562 aa).

Residue Y101 is the Proton donor of the active site. R154 is an NAD(+) binding site. K172 functions as the Proton acceptor in the catalytic mechanism. Positions 243, 244, and 267 each coordinate a divalent metal cation. D267 and N415 together coordinate NAD(+).

It belongs to the malic enzymes family. Homotetramer. Mg(2+) is required as a cofactor. Mn(2+) serves as cofactor.

The catalysed reaction is (S)-malate + NAD(+) = pyruvate + CO2 + NADH. It carries out the reaction oxaloacetate + H(+) = pyruvate + CO2. The sequence is that of NAD-dependent malic enzyme from Shewanella pealeana (strain ATCC 700345 / ANG-SQ1).